Reading from the N-terminus, the 307-residue chain is High-affinity branched-chain amino acid transport system permease protein BraD (307 aa).

10 helical membrane passes run 21–41 (YALI…INFA), 45–65 (VYMI…MMGL), 70–90 (LMML…GYSI), 104–124 (LIPL…VMLS), 132–152 (IPTL…GVVI), 154–174 (YMQI…TLFI), 203–223 (IIAL…VLLG), 224–244 (MQYG…AFTA), 245–265 (AVLG…LLGV), and 280–300 (DVVA…GILG).

This sequence belongs to the binding-protein-dependent transport system permease family. LivHM subfamily.

It localises to the cell inner membrane. Functionally, component of the high affinity leucine, isoleucine, valine, transport system (LIV-I), which is operative without Na(+) and is specific for alanine and threonine, in addition to branched-chain amino acids. The polypeptide is High-affinity branched-chain amino acid transport system permease protein BraD (braD) (Pseudomonas aeruginosa (strain ATCC 15692 / DSM 22644 / CIP 104116 / JCM 14847 / LMG 12228 / 1C / PRS 101 / PAO1)).